The chain runs to 636 residues: Transcription termination factor FttA (636 aa).

The segment at 3–70 (SEMLEEIKRT…IIIRSDRSVL (68 aa)) is KHa. Residues 71 to 138 (MDPEKAIRKI…WAPKILRTPP (68 aa)) form a KHb region. The tract at residues 179 to 383 (WARLTAMGGF…LVMESTYGGH (205 aa)) is metallo-beta-lactamase N-terminus. His-242, His-244, Asp-246, His-247, His-329, and Asp-352 together coordinate Zn(2+). The beta-Casp stretch occupies residues 384–577 (EDVQPSRNRA…MNIKTIEGFS (194 aa)). Positions 578–636 (GHSDRRQLMEYVKRISPKPEKILLCHGDNYKTLDLASSIYRTYRIETKTPLNLETVRIQ) are metallo-beta-lactamase C-terminus. Position 603 (His-603) interacts with Zn(2+).

The protein belongs to the metallo-beta-lactamase superfamily. RNA-metabolizing metallo-beta-lactamase-like family. FttA subfamily. Homodimer. Interacts with RNA polymerase (RNAP), interacts with the Spt4-Spt5 complex. Does not seem to interact with the RNA degrading exosome. The cofactor is Zn(2+).

Most active at 0.5 M or 0.7 M NaCl, less active at 1.0 M NaCl. Nuclease activity is inhibited by N,N,Tetrakis-(2-pyridylmethyl)-ethylene diamine (TPEN), a specific chelator of zinc ions. Its function is as follows. Terminates transcription on the whole genome. Termination is linked to FttA-mediated RNA cleavage and does not require NTP hydrolysis. Cleaves endonucleolytically at the RNA exit channel of RNA polymerase (RNAP); the 5'-3' exonuclease activity of this protein degrades the nascent RNA released from RNAP. In terms of biological role, an RNA nuclease, it bind single-stranded RNA (ssRNA) with a preference for U-rich sequences. The chain is Transcription termination factor FttA from Methanothermobacter thermautotrophicus (strain ATCC 29096 / DSM 1053 / JCM 10044 / NBRC 100330 / Delta H) (Methanobacterium thermoautotrophicum).